The chain runs to 817 residues: Protein EFR3 homolog B (817 aa).

Phosphoserine is present on residues Ser-212, Ser-214, and Ser-216.

This sequence belongs to the EFR3 family. Component of a phosphatidylinositol 4-kinase (PI4K) complex, composed of PI4KA, EFR3 (EFR3A or EFR3B), TTC7 (TTC7A or TTC7B) and HYCC (HYCC1 or HYCC2). In terms of processing, palmitoylated at its N-terminus, anchoring the protein to the plasma membrane. In terms of tissue distribution, widely expressed.

Its subcellular location is the cell membrane. It localises to the cytoplasm. It is found in the cytosol. Functionally, component of a complex required to localize phosphatidylinositol 4-kinase (PI4K) to the plasma membrane. The complex acts as a regulator of phosphatidylinositol 4-phosphate (PtdIns(4)P) synthesis. In the complex, EFR3B probably acts as the membrane-anchoring component. Also involved in responsiveness to G-protein-coupled receptors; it is however unclear whether this role is direct or indirect. The sequence is that of Protein EFR3 homolog B (Efr3b) from Mus musculus (Mouse).